The chain runs to 419 residues: Serine hydroxymethyltransferase (419 aa).

Residues Leu-121 and 125 to 127 contribute to the (6S)-5,6,7,8-tetrahydrofolate site; that span reads GHL. The residue at position 229 (Lys-229) is an N6-(pyridoxal phosphate)lysine.

Belongs to the SHMT family. As to quaternary structure, homodimer. Pyridoxal 5'-phosphate serves as cofactor.

It is found in the cytoplasm. The enzyme catalyses (6R)-5,10-methylene-5,6,7,8-tetrahydrofolate + glycine + H2O = (6S)-5,6,7,8-tetrahydrofolate + L-serine. The protein operates within one-carbon metabolism; tetrahydrofolate interconversion. Its pathway is amino-acid biosynthesis; glycine biosynthesis; glycine from L-serine: step 1/1. Functionally, catalyzes the reversible interconversion of serine and glycine with tetrahydrofolate (THF) serving as the one-carbon carrier. This reaction serves as the major source of one-carbon groups required for the biosynthesis of purines, thymidylate, methionine, and other important biomolecules. Also exhibits THF-independent aldolase activity toward beta-hydroxyamino acids, producing glycine and aldehydes, via a retro-aldol mechanism. This chain is Serine hydroxymethyltransferase, found in Streptomyces griseus subsp. griseus (strain JCM 4626 / CBS 651.72 / NBRC 13350 / KCC S-0626 / ISP 5235).